The sequence spans 189 residues: Thioredoxin-like protein CITRX, chloroplastic (189 aa).

The N-terminal 56 residues, 1–56 (MAMAAAASLLPASAAPTLPGRAFRPPRNSTPTASLSCDGGSRCRGVGLGVILGGCR), are a transit peptide targeting the chloroplast. In terms of domain architecture, Thioredoxin spans 72 to 189 (GSGKYIAPDY…MIRNIIDNEL (118 aa)). Active-site nucleophile residues include cysteine 112 and cysteine 115. A disulfide bridge links cysteine 112 with cysteine 115.

This sequence belongs to the thioredoxin family. Plant CITRX-type subfamily.

The protein localises to the plastid. It is found in the chloroplast. Its function is as follows. Probable thiol-disulfide oxidoreductase that may play a role in proper chloroplast development. This Oryza sativa subsp. japonica (Rice) protein is Thioredoxin-like protein CITRX, chloroplastic.